Consider the following 204-residue polypeptide: Crossover junction endodeoxyribonuclease RuvC (204 aa).

Residues D7, E68, and D141 contribute to the active site. The Mg(2+) site is built by D7, E68, and D141.

This sequence belongs to the RuvC family. As to quaternary structure, homodimer which binds Holliday junction (HJ) DNA. The HJ becomes 2-fold symmetrical on binding to RuvC with unstacked arms; it has a different conformation from HJ DNA in complex with RuvA. In the full resolvosome a probable DNA-RuvA(4)-RuvB(12)-RuvC(2) complex forms which resolves the HJ. Requires Mg(2+) as cofactor.

Its subcellular location is the cytoplasm. It carries out the reaction Endonucleolytic cleavage at a junction such as a reciprocal single-stranded crossover between two homologous DNA duplexes (Holliday junction).. In terms of biological role, the RuvA-RuvB-RuvC complex processes Holliday junction (HJ) DNA during genetic recombination and DNA repair. Endonuclease that resolves HJ intermediates. Cleaves cruciform DNA by making single-stranded nicks across the HJ at symmetrical positions within the homologous arms, yielding a 5'-phosphate and a 3'-hydroxyl group; requires a central core of homology in the junction. The consensus cleavage sequence is 5'-(A/T)TT(C/G)-3'. Cleavage occurs on the 3'-side of the TT dinucleotide at the point of strand exchange. HJ branch migration catalyzed by RuvA-RuvB allows RuvC to scan DNA until it finds its consensus sequence, where it cleaves and resolves the cruciform DNA. The polypeptide is Crossover junction endodeoxyribonuclease RuvC (Clavibacter sepedonicus (Clavibacter michiganensis subsp. sepedonicus)).